A 757-amino-acid polypeptide reads, in one-letter code: Filensin (757 aa).

The tract at residues 1 to 39 is head; that stretch reads MYRRSYVFQTRKEQYERAEEAPRAAEPDRLAEARAAAPN. S5 carries the post-translational modification Phosphoserine. One can recognise an IF rod domain in the interval 39 to 319; it reads NLAALQGLGE…RIIENEGNRL (281 aa). A coil 1A region spans residues 40–74; it reads LAALQGLGERVAAHVQRARALEQRHAVLRRQLDAF. An N-acetylalanine modification is found at A41. Residues 75 to 83 form a linker 1 region; it reads QRLDELAGP. Residues 84–183 are coil 1B; the sequence is EDALARHVEG…RYKKNLLEIQ (100 aa). Residues 184 to 200 form a linker 12 region; the sequence is TYVTILQQIIQTTPQAA. The interval 201-319 is coil 2; that stretch reads AITSGMREEK…RIIENEGNRL (119 aa). The segment at 320–756 is tail; that stretch reads SSAFIETPIT…KKLGEKGSSS (437 aa). 2 positions are modified to phosphoserine: S340 and S419. Disordered stretches follow at residues 406 to 436 and 493 to 705; these read EGESKLEPGDEEASPPTQEGAPEDVPDGGKI and GVVV…PPRK. The N-myristoyl glycine moiety is linked to residue G433. The span at 493-512 shows a compositional bias: low complexity; that stretch reads GVVVSKGDDSVPPDSGVEPS. Phosphoserine is present on S512. Basic and acidic residues predominate over residues 528–658; it reads QEKEDGLKEE…KQDDQKEEGA (131 aa). Repeat 1 spans residues 532-545; that stretch reads DGLKEEGGPPEGKG. Residues 532-622 form a 7 X 14 AA tandem repeats region; sequence DGLKEEGGPP…EEEGPLQKKE (91 aa). The stretch at 546-552 is one 2; truncated repeat; it reads EPPEGKG. 5 consecutive repeat copies span residues 553–566, 567–580, 581–594, 595–608, and 609–622. Phosphothreonine is present on residues T628 and T674. 3 positions are modified to phosphoserine: S701, S754, and S755.

The protein belongs to the intermediate filament family. As to quaternary structure, part of a complex required for lens intermediate filament formation composed of BFSP1, BFSP2 and CRYAA. Identified in a complex that contains VIM, EZR, AHNAK, BFSP1, BFSP2, ANK2, PLEC, PRX and spectrin. Found in a complex composed of PPL (via C-terminal linker domain), BFSP1 and BFSP2 in the retinal lens. Within the complex interacts with BFSP2. Interacts (via C-terminus) with MIP (via C-terminus) in aged lens fiber cells. Post-translationally, proteolytically cleaved during lens cell fiber differentiation with increased fragmentation as fiber cell age increases. In terms of processing, myristoylated at Gly-433 following proteolytic cleavage at Asp-432. Acetylated at Ala-41 following proteolytic cleavage at Leu-40. As to expression, abundantly expressed in both the inner and outer cortex of the retina, expressed at a lower level in the nucleus of the retina (at protein level). Detected in eye lens fiber cells (at protein level).

It is found in the cell membrane. It localises to the cytoplasm. Its subcellular location is the cytoskeleton. The protein localises to the cell cortex. Its function is as follows. Required for the correct formation of lens intermediate filaments as part of a complex composed of BFSP1, BFSP2 and CRYAA. Involved in altering the calcium regulation of MIP water permeability. The sequence is that of Filensin (BFSP1) from Bos taurus (Bovine).